The sequence spans 228 residues: Superoxide dismutase [Mn] (228 aa).

The signal sequence occupies residues 1–23 (MTRSLKTTLILLASSVISMSALA). The Mn(2+) site is built by H49, H100, D188, and H192.

Belongs to the iron/manganese superoxide dismutase family. The cofactor is Mn(2+).

It localises to the periplasm. It catalyses the reaction 2 superoxide + 2 H(+) = H2O2 + O2. In terms of biological role, destroys superoxide anion radicals which are normally produced within the cells and which are toxic to biological systems. This Acinetobacter baylyi (strain ATCC 33305 / BD413 / ADP1) protein is Superoxide dismutase [Mn] (sodA).